The sequence spans 179 residues: RNA pyrophosphohydrolase (179 aa).

Positions 6-149 (GYRANVGIVI…KKPIYEDMLK (144 aa)) constitute a Nudix hydrolase domain. A Nudix box motif is present at residues 38 to 59 (GGIDFGESELDALFRELNEEIG).

This sequence belongs to the Nudix hydrolase family. RppH subfamily. Requires a divalent metal cation as cofactor.

Functionally, accelerates the degradation of transcripts by removing pyrophosphate from the 5'-end of triphosphorylated RNA, leading to a more labile monophosphorylated state that can stimulate subsequent ribonuclease cleavage. The polypeptide is RNA pyrophosphohydrolase (Ruthia magnifica subsp. Calyptogena magnifica).